Consider the following 209-residue polypeptide: Rac-like GTP-binding protein ARAC9 (209 aa).

Residue 25-32 (GDGAVGKT) participates in GTP binding. Positions 47–55 (YVPTVFDNF) match the Effector region motif. GTP contacts are provided by residues 72 to 76 (DTAGQ) and 130 to 133 (TKSD). Cys206 carries the post-translational modification Cysteine methyl ester. Cys206 carries S-geranylgeranyl cysteine lipidation. Positions 207 to 209 (HVL) are cleaved as a propeptide — removed in mature form.

This sequence belongs to the small GTPase superfamily. Rho family. In terms of assembly, interacts with SPK1.

It is found in the cytoplasm. The protein localises to the membrane. Inactive GDP-bound Rho GTPases reside in the cytosol, are found in a complex with Rho GDP-dissociation inhibitors (Rho GDIs), and are released from the GDI protein in order to translocate to membranes upon activation. This chain is Rac-like GTP-binding protein ARAC9 (ARAC9), found in Arabidopsis thaliana (Mouse-ear cress).